The primary structure comprises 285 residues: Cytochrome c1 (285 aa).

The N-terminal stretch at 1–22 is a signal peptide; it reads MIRKLTLTAATALALSGGAAMA. Residues Cys-58, Cys-61, His-62, and Met-207 each coordinate heme c. Residues 251 to 269 form a helical membrane-spanning segment; that stretch reads AGFTAVMFLTVLSVLLYLT.

As to quaternary structure, the main subunits of complex b-c1 are: cytochrome b, cytochrome c1 and the Rieske protein. In terms of processing, binds 1 heme c group covalently per subunit.

It is found in the cell membrane. Functionally, component of the ubiquinol-cytochrome c reductase complex (complex III or cytochrome b-c1 complex), which is a respiratory chain that generates an electrochemical potential coupled to ATP synthesis. c1 functions as an electron donor to cytochrome c. This Cereibacter sphaeroides (Rhodobacter sphaeroides) protein is Cytochrome c1 (petC).